The chain runs to 470 residues: Shutoff alkaline exonuclease (470 aa).

Belongs to the herpesviridae alkaline nuclease family. As to quaternary structure, forms a complex with the DNA polymerase, the DNA polymerase processivity factor, and the major DNA binding protein.

The protein resides in the host nucleus. The protein localises to the host cytoplasm. Functionally, plays a role in processing non linear or branched viral DNA intermediates in order to promote the production of mature packaged unit-length linear progeny viral DNA molecules. Exhibits endonuclease and exonuclease activities and accepts both double-stranded and single-stranded DNA as substrate. Exonuclease digestion of DNA is in the 5'-&gt; 3' direction and the products are 5'-monophosphate nucleosides. Additionally, forms a recombinase with the major DNA-binding protein, which displays strand exchange activity. Also acts as a cytoplasmic RNA endonuclease that induces degradation of the majority of the cellular messenger RNAs during early lytic infection. The resulting inhibition of cellular protein synthesis serves to ensure maximal viral gene expression and evasion from host immune response. Internally cleaves host mRNAs which are then degraded by the cellular exonuclease XRN1. Bypasses therefore the regulatory steps of deadenylation and decapping normally required for XRN1 activation. The protein is Shutoff alkaline exonuclease of Epstein-Barr virus (strain GD1) (HHV-4).